We begin with the raw amino-acid sequence, 1226 residues long: 3-hydroxy-3-methylglutaryl-coenzyme A reductase (1226 aa).

The next 5 helical transmembrane spans lie at 17–37, 224–244, 252–272, 337–357, and 373–393; these read IETI…ILSG, ILVV…LFLA, FWLS…TLPM, VGNM…VGVN, and LLAM…TIMV. Positions 223 to 391 constitute an SSD domain; the sequence is DILVVLTGYI…FTLYTAVLTI (169 aa). Residues 428–449 are disordered; the sequence is LSRKSSKQSVTEPETTKNLRQR. Polar residues predominate over residues 434–445; sequence KQSVTEPETTKN. Residues 481 to 501 form a helical membrane-spanning segment; the sequence is LLLIASFLTLHILNFCTTLTS. Disordered regions lie at residues 683–702 and 722–742; these read APAP…PPPL and LPIR…EVEP. Residues 685-702 show a composition bias toward pro residues; the sequence is APAPAPEPEPPVNRPPPL. The Charge relay system role is filled by Glu-869. 875-881 serves as a coordination point for CoA; that stretch reads STSRGCK. NADP(+) is bound by residues 936-938 and 963-971; these read SRF and DAMGMNMIS. The active-site Charge relay system is Lys-1001. 1030–1032 is a binding site for CoA; it reads VLK. The active-site Charge relay system is the Asp-1077. The chain crosses the membrane as a helical span at residues 1150–1170; the sequence is IIASAVMAGELSLISALAAGH. 1174-1175 contributes to the CoA binding site; that stretch reads AH. His-1175 functions as the Proton donor in the catalytic mechanism. NADP(+) is bound at residue 1179-1180; sequence NR. The disordered stretch occupies residues 1182–1226; sequence QLNTPMPSRPHTPGPEDVSHVQQLPTPSASDDKGVTAQGYVVEAK. The segment covering 1201–1210 has biased composition (polar residues); the sequence is HVQQLPTPSA.

The protein belongs to the HMG-CoA reductase family.

The protein localises to the endoplasmic reticulum membrane. The enzyme catalyses (R)-mevalonate + 2 NADP(+) + CoA = (3S)-3-hydroxy-3-methylglutaryl-CoA + 2 NADPH + 2 H(+). It participates in metabolic intermediate biosynthesis; (R)-mevalonate biosynthesis; (R)-mevalonate from acetyl-CoA: step 3/3. HMG-CoA reductase; part of the first module of ergosterol biosynthesis pathway that includes the early steps of the pathway, conserved across all eukaryotes, and which results in the formation of mevalonate from acetyl-coenzyme A (acetyl-CoA). This module also plays a key role in the biosynthesis of triterpenes such as ganoderic acids (GA), a group of highly oxygenated lanostane-type triterpenoids which are well recognized as a main group of unique bioactive compounds in the medicinal mushroom Ganoderma lucidum. In this module, the acetyl-CoA acetyltransferase catalyzes the formation of acetoacetyl-CoA. The hydroxymethylglutaryl-CoA synthase HMGS then condenses acetyl-CoA with acetoacetyl-CoA to form HMG-CoA. The rate-limiting step of the early module is the reduction to mevalonate by the 3-hydroxy-3-methylglutaryl-coenzyme A (HMG-CoA) reductase. The chain is 3-hydroxy-3-methylglutaryl-coenzyme A reductase from Ganoderma lucidum (Ling zhi medicinal fungus).